Here is a 285-residue protein sequence, read N- to C-terminus: ATP phosphoribosyltransferase (285 aa).

This sequence belongs to the ATP phosphoribosyltransferase family. Long subfamily. Mg(2+) serves as cofactor.

Its subcellular location is the cytoplasm. It catalyses the reaction 1-(5-phospho-beta-D-ribosyl)-ATP + diphosphate = 5-phospho-alpha-D-ribose 1-diphosphate + ATP. Its pathway is amino-acid biosynthesis; L-histidine biosynthesis; L-histidine from 5-phospho-alpha-D-ribose 1-diphosphate: step 1/9. Feedback inhibited by histidine. Catalyzes the condensation of ATP and 5-phosphoribose 1-diphosphate to form N'-(5'-phosphoribosyl)-ATP (PR-ATP). Has a crucial role in the pathway because the rate of histidine biosynthesis seems to be controlled primarily by regulation of HisG enzymatic activity. The chain is ATP phosphoribosyltransferase from Sulfolobus acidocaldarius (strain ATCC 33909 / DSM 639 / JCM 8929 / NBRC 15157 / NCIMB 11770).